A 565-amino-acid polypeptide reads, in one-letter code: Ubiquitin carboxyl-terminal hydrolase 21 (565 aa).

2 stretches are compositionally biased toward basic and acidic residues: residues 1 to 14 (MPQA…RTRE) and 58 to 70 (PPDE…DLGR). Positions 1–128 (MPQASEHRLG…LRPMGIALGG (128 aa)) are disordered. Residues 71–81 (GRTSGSRPRGP) show a composition bias toward low complexity. Polar residues predominate over residues 104–116 (SRTNLTRSKSVSS). Positions 134–152 (ELGAALSRLALRPEPPTLR) match the Nuclear export signal motif. The USP domain occupies 212–558 (VGLRNLGNTC…EGYVLFYQLM (347 aa)). Cys-221 acts as the Nucleophile in catalysis. Residues 324 to 347 (APPILASGPVPSPPRRGGALHEEP) are disordered. Cys-384, Cys-387, Cys-437, and Cys-440 together coordinate Zn(2+). The active-site Proton acceptor is the His-518.

Belongs to the peptidase C19 family. USP21 subfamily. In terms of assembly, interacts with BEND3.

The protein localises to the cytoplasm. It is found in the nucleus. It carries out the reaction Thiol-dependent hydrolysis of ester, thioester, amide, peptide and isopeptide bonds formed by the C-terminal Gly of ubiquitin (a 76-residue protein attached to proteins as an intracellular targeting signal).. Deubiquitinates histone H2A, a specific tag for epigenetic transcriptional repression, thereby acting as a coactivator. Deubiquitination of histone H2A releaves the repression of di- and trimethylation of histone H3 at 'Lys-4', resulting in regulation of transcriptional initiation. Regulates gene expression via histone H2A deubiquitination. Deubiquitinates BAZ2A/TIP5 leading to its stabilization. Also capable of removing NEDD8 from NEDD8 conjugates but has no effect on Sentrin-1 conjugates. Also acts as a negative regulator of the ribosome quality control (RQC) by mediating deubiquitination of 40S ribosomal proteins RPS10/eS10 and RPS20/uS10, thereby antagonizing ZNF598-mediated 40S ubiquitination. This chain is Ubiquitin carboxyl-terminal hydrolase 21 (Usp21), found in Rattus norvegicus (Rat).